Here is a 323-residue protein sequence, read N- to C-terminus: Low affinity immunoglobulin gamma Fc region receptor II-c (323 aa).

An N-terminal signal peptide occupies residues 1–42 (MGILSFLPVLATESDWADCKSPQPWGHMLLWTAVLFLAPVAG). Over 43–223 (TPAAPPKAVL…VQAPSSSPMG (181 aa)) the chain is Extracellular. Ig-like C2-type domains are found at residues 48–127 (PKAV…VHLT) and 131–213 (EWLV…VTIT). 2 disulfides stabilise this stretch: cysteine 71-cysteine 113 and cysteine 152-cysteine 196. 3 N-linked (GlcNAc...) asparagine glycosylation sites follow: asparagine 106, asparagine 180, and asparagine 187. Residues 224–246 (IIVAVVTGIAVAAIVAAVVALIY) form a helical membrane-spanning segment. At 247–323 (CRKKRISANS…PPNDHVNSNN (77 aa)) the chain is on the cytoplasmic side. Residues 277-323 (KRQPEETNNDYETADGGYMTLNPRAPTDDDKNIYLTLPPNDHVNSNN) form a disordered region. 2 positions are modified to phosphotyrosine; by SRC-type Tyr-kinases: tyrosine 294 and tyrosine 310.

In terms of processing, phosphorylated by SRC-type Tyr-kinases such as LYN, BLK, FYN and SYK. Isoform IIC1 is detected in monocytes, macrophages, polymorphonuclear cells and natural killer cells.

The protein localises to the cytoplasm. Its subcellular location is the cell membrane. In terms of biological role, receptor for the Fc region of complexed immunoglobulins gamma. Low affinity receptor. Involved in a variety of effector and regulatory functions such as phagocytosis of immune complexes and modulation of antibody production by B-cells. This chain is Low affinity immunoglobulin gamma Fc region receptor II-c (FCGR2C), found in Homo sapiens (Human).